The chain runs to 1369 residues: Microtubule-associated tumor suppressor candidate 2 (1369 aa).

7 disordered regions span residues A180–V262, G374–N442, G477–N509, N582–T627, R791–P839, S861–E992, and W1331–R1369. Composition is skewed to polar residues over residues P246–V262 and L392–A401. Positions R641–N980 are mediates interaction with MAPRE1. The tract at residues G801–Q890 is sufficient for interaction with KIF2C. The tract at residues G801–N1150 is localization to the growing distal tip of microtubules. Polar residues predominate over residues T804–P814. Low complexity predominate over residues A821–S834. A compositionally biased stretch (basic and acidic residues) spans T937–T947. Residues R991–T1335 adopt a coiled-coil conformation. Over residues S1348–R1369 the composition is skewed to low complexity.

This sequence in the C-terminal section; belongs to the MTUS1 family. In terms of assembly, homodimer. Interacts with KIF2C and MAPRE1; the interaction is direct and probably targets MTUS2 and KIF2C to microtubules. In terms of tissue distribution, detected in embryonic stem cells differentiating to cardiomyocytes.

The protein localises to the cytoplasm. The protein resides in the cytoskeleton. Functionally, binds microtubules. Together with MAPRE1 may target the microtubule depolymerase KIF2C to the plus-end of microtubules. May regulate the dynamics of microtubules at their growing distal tip. This chain is Microtubule-associated tumor suppressor candidate 2 (MTUS2), found in Homo sapiens (Human).